A 679-amino-acid chain; its full sequence is Protein polyglycylase TTLL10 (679 aa).

Residues 1 to 15 are compositionally biased toward basic residues; sequence MPLHPPARRPHGHRR. Disordered stretches follow at residues 1–33, 49–77, and 96–124; these read MPLH…GRLS, GHRA…LMPA, and VSFK…RMGS. Residues 18–30 are compositionally biased toward polar residues; it reads SEAQTEATTQDTG. Residues 96 to 110 are compositionally biased toward basic residues; the sequence is VSFKRPKRSRTHQSH. The region spanning 172-543 is the TTL domain; sequence QGPFFYIGGT…TCQKSLHSQK (372 aa). Residues K304, 310–311, 353–356, 366–368, and 409–410 contribute to the ATP site; these read QG, QRYV, KFD, and TN. A protein is bound at residue Q310. The Mg(2+) site is built by D489, E502, and N504. Positions 605–679 are disordered; it reads DRPAARKSMS…EQRSTSHRGS (75 aa).

The cofactor is Mg(2+).

The protein resides in the cytoplasm. The protein localises to the cytoskeleton. It localises to the cell projection. It is found in the cilium. Its subcellular location is the cilium axoneme. The enzyme catalyses (glycyl)(n)-glycyl-L-glutamyl-[protein] + glycine + ATP = (glycyl)(n+1)-glycyl-L-glutamyl-[protein] + ADP + phosphate + H(+). Polyglycylase which modifies both tubulin and non-tubulin proteins, generating polyglycine side chains of variable lengths on the gamma-carboxyl groups of specific glutamate residues of target proteins. Involved in the elongation step rather than the initiation step of the polyglycylation reaction. Polyglycylates alpha-tubulin and beta-tubulin. Polyglycylates non-tubulin proteins such as nucleosome assembly protein NAP1. The polypeptide is Protein polyglycylase TTLL10 (Rattus norvegicus (Rat)).